We begin with the raw amino-acid sequence, 464 residues long: Chromosomal replication initiator protein DnaA (464 aa).

A domain I, interacts with DnaA modulators region spans residues 1–82; it reads MSLSLWQQCL…LLRFEVGSKP (82 aa). A domain II region spans residues 82–127; that stretch reads PITQVISQTVTASVSSAPAAPAARTAAPSRPSWDNAAAQPELSYRS. Positions 98 to 113 are enriched in low complexity; the sequence is APAAPAARTAAPSRPS. The segment at 98 to 117 is disordered; that stretch reads APAAPAARTAAPSRPSWDNA. Residues 128–344 are domain III, AAA+ region; sequence NVNPKHTFDN…GALNRVIANA (217 aa). ATP contacts are provided by Gly-172, Gly-174, Lys-175, and Thr-176. Positions 345 to 464 are domain IV, binds dsDNA; sequence NFTGRAITID…FSNLIRTLSS (120 aa).

The protein belongs to the DnaA family. As to quaternary structure, oligomerizes as a right-handed, spiral filament on DNA at oriC.

It is found in the cytoplasm. Functionally, plays an important role in the initiation and regulation of chromosomal replication. Binds to the origin of replication; it binds specifically double-stranded DNA at a 9 bp consensus (dnaA box): 5'-TTATC[CA]A[CA]A-3'. DnaA binds to ATP and to acidic phospholipids. DnaA can inhibit its own gene expression as well as that of other genes. Plays an essential role in the initiation and regulation of chromosomal replication. ATP-DnaA binds to the origin of replication (oriC) to initiate formation of the DNA replication initiation complex once per cell cycle. Binds the DnaA box (a 9 base pair repeat at the origin) and separates the double-stranded (ds)DNA. Forms a right-handed helical filament on oriC DNA; dsDNA binds to the exterior of the filament while single-stranded (ss)DNA is stabiized in the filament's interior. The ATP-DnaA-oriC complex binds and stabilizes one strand of the AT-rich DNA unwinding element (DUE), permitting loading of DNA polymerase. After initiation quickly degrades to an ADP-DnaA complex that is not apt for DNA replication. Binds acidic phospholipids. In Serratia marcescens, this protein is Chromosomal replication initiator protein DnaA.